We begin with the raw amino-acid sequence, 203 residues long: Small ribosomal subunit protein uS4 (203 aa).

The 81-residue stretch at 93-173 (RRLDNVVFRS…FPSWIQVDKA (81 aa)) folds into the S4 RNA-binding domain.

It belongs to the universal ribosomal protein uS4 family. As to quaternary structure, part of the 30S ribosomal subunit. Contacts protein S5. The interaction surface between S4 and S5 is involved in control of translational fidelity.

One of the primary rRNA binding proteins, it binds directly to 16S rRNA where it nucleates assembly of the body of the 30S subunit. Functionally, with S5 and S12 plays an important role in translational accuracy. The chain is Small ribosomal subunit protein uS4 from Chlorobium limicola (strain DSM 245 / NBRC 103803 / 6330).